Here is a 381-residue protein sequence, read N- to C-terminus: Dual-specificity RNA methyltransferase RlmN (381 aa).

Catalysis depends on glutamate 96, which acts as the Proton acceptor. Residues 102-342 (TDDRGTLCVS…TRTTRGDDID (241 aa)) enclose the Radical SAM core domain. Residues cysteine 109 and cysteine 345 are joined by a disulfide bond. [4Fe-4S] cluster is bound by residues cysteine 116, cysteine 120, and cysteine 123. Residues 170–171 (GE), serine 202, 224–226 (SLH), and asparagine 302 each bind S-adenosyl-L-methionine. Cysteine 345 functions as the S-methylcysteine intermediate in the catalytic mechanism.

Belongs to the radical SAM superfamily. RlmN family. The cofactor is [4Fe-4S] cluster.

The protein resides in the cytoplasm. It carries out the reaction adenosine(2503) in 23S rRNA + 2 reduced [2Fe-2S]-[ferredoxin] + 2 S-adenosyl-L-methionine = 2-methyladenosine(2503) in 23S rRNA + 5'-deoxyadenosine + L-methionine + 2 oxidized [2Fe-2S]-[ferredoxin] + S-adenosyl-L-homocysteine. It catalyses the reaction adenosine(37) in tRNA + 2 reduced [2Fe-2S]-[ferredoxin] + 2 S-adenosyl-L-methionine = 2-methyladenosine(37) in tRNA + 5'-deoxyadenosine + L-methionine + 2 oxidized [2Fe-2S]-[ferredoxin] + S-adenosyl-L-homocysteine. Its function is as follows. Specifically methylates position 2 of adenine 2503 in 23S rRNA and position 2 of adenine 37 in tRNAs. m2A2503 modification seems to play a crucial role in the proofreading step occurring at the peptidyl transferase center and thus would serve to optimize ribosomal fidelity. This is Dual-specificity RNA methyltransferase RlmN from Pseudomonas putida (strain GB-1).